A 703-amino-acid polypeptide reads, in one-letter code: Arf-GAP with GTPase, ANK repeat and PH domain-containing protein 9 (703 aa).

3 disordered regions span residues 249-287 (KRNG…TPTP), 299-323 (FTSE…TIGS), and 427-449 (SSTT…KHLK). Polar residues predominate over residues 271 to 286 (QEDPQFSVPPTANTPT). Basic and acidic residues predominate over residues 303 to 318 (KGSDPDKERKAPENHA). Residues 327 to 488 (IPIKQGMLLK…WVQAIQSQIL (162 aa)) enclose the PH domain. In terms of domain architecture, Arf-GAP spans 509-629 (AMALQSIQNM…LFLAPLPCTE (121 aa)). A C4-type zinc finger spans residues 524–547 (CVDCETQNPKWASLNLGVLMCIEC). One copy of the ANK repeat lies at 631 to 700 (SLGQQLLRAT…WTSWPEMPTG (70 aa)).

Belongs to the centaurin gamma-like family.

In terms of biological role, putative GTPase-activating protein. This is Arf-GAP with GTPase, ANK repeat and PH domain-containing protein 9 (AGAP9) from Homo sapiens (Human).